The following is a 249-amino-acid chain: NADH-quinone oxidoreductase subunit C (249 aa).

The segment at 1–29 is disordered; sequence MTENQTTPDPGEPGSSADRPGGLVPTGDS.

This sequence belongs to the complex I 30 kDa subunit family. NDH-1 is composed of 14 different subunits. Subunits NuoB, C, D, E, F, and G constitute the peripheral sector of the complex.

Its subcellular location is the cell membrane. The enzyme catalyses a quinone + NADH + 5 H(+)(in) = a quinol + NAD(+) + 4 H(+)(out). Its function is as follows. NDH-1 shuttles electrons from NADH, via FMN and iron-sulfur (Fe-S) centers, to quinones in the respiratory chain. The immediate electron acceptor for the enzyme in this species is believed to be a menaquinone. Couples the redox reaction to proton translocation (for every two electrons transferred, four hydrogen ions are translocated across the cytoplasmic membrane), and thus conserves the redox energy in a proton gradient. In Saccharopolyspora erythraea (strain ATCC 11635 / DSM 40517 / JCM 4748 / NBRC 13426 / NCIMB 8594 / NRRL 2338), this protein is NADH-quinone oxidoreductase subunit C.